Here is a 971-residue protein sequence, read N- to C-terminus: Lon protease homolog, mitochondrial (971 aa).

The transit peptide at 1–55 directs the protein to the mitochondrion; the sequence is MYRAGAVLLRGATRTRLLAAASAHQSFATFSQRNQSILMMKSMELAGNSGERRFY. The region spanning 89-359 is the Lon N-terminal domain; sequence VPMLAINRYP…IALLLIQKEK (271 aa). The disordered stretch occupies residues 190–255; it reads TPKNETPLNG…PPSATGEKQK (66 aa). Residues 214 to 224 show a composition bias toward pro residues; sequence LTPPPSPPPLA. An ATP-binding site is contributed by 512 to 519; that stretch reads GPPGVGKT. Positions 718 to 749 are disordered; it reads AEQQNEDEEPAEKATTAITENSEAEPITSTSS. A compositionally biased stretch (polar residues) spans 733–749; that stretch reads TAITENSEAEPITSTSS. Residues 784–971 form the Lon proteolytic domain; the sequence is VTPPGVIMGL…YDELYEHLFQ (188 aa). Residues Ser878 and Lys921 contribute to the active site.

Belongs to the peptidase S16 family. As to quaternary structure, homohexamer or homoheptamer. Organized in a ring with a central cavity.

The protein resides in the mitochondrion matrix. The catalysed reaction is Hydrolysis of proteins in presence of ATP.. Functionally, ATP-dependent serine protease that mediates the selective degradation of misfolded, unassembled or oxidatively damaged polypeptides as well as certain short-lived regulatory proteins in the mitochondrial matrix. May also have a chaperone function in the assembly of inner membrane protein complexes. Participates in the regulation of mitochondrial gene expression and in the maintenance of the integrity of the mitochondrial genome. Binds to mitochondrial DNA in a site-specific manner. Involved in the degradation of transcription factor atfs-1 in the mitochondrion. The chain is Lon protease homolog, mitochondrial from Caenorhabditis elegans.